Consider the following 520-residue polypeptide: Cytochrome P450 72A68 (520 aa).

Residues 11-31 traverse the membrane as a helical segment; the sequence is IILITVTFGLVYAWRVLNWMW. Cys-466 serves as a coordination point for heme.

Belongs to the cytochrome P450 family. It depends on heme as a cofactor.

The protein resides in the membrane. The enzyme catalyses oleanolate + 3 reduced [NADPH--hemoprotein reductase] + 3 O2 = gypsogenate + 3 oxidized [NADPH--hemoprotein reductase] + 4 H2O + 4 H(+). Catalyzes the carboxylation of oleanolic acid at the C-23 position to form gypsogenic acid. Involved in the hemolytic saponin biosynthetic pathway. This Medicago truncatula (Barrel medic) protein is Cytochrome P450 72A68.